A 234-amino-acid chain; its full sequence is Transcriptional regulatory protein CseB (234 aa).

In terms of domain architecture, Response regulatory spans 6 to 119 (HVLFVEDDDV…VLVARIRAVL (114 aa)). Asp-55 carries the post-translational modification 4-aspartylphosphate. The ompR/PhoB-type DNA-binding region spans 140 to 234 (GGVLTFGDLE…VRGFGYKLKA (95 aa)).

Post-translationally, phosphorylated by CseC.

The protein resides in the cytoplasm. Its function is as follows. Member of the two-component regulatory system CseB/CseC involved in the stability of the cell envelope. CseB activates transcription of RNA polymerase sigma-E factor, in response to changes in the cell envelope. The sequence is that of Transcriptional regulatory protein CseB (cseB) from Streptomyces coelicolor (strain ATCC BAA-471 / A3(2) / M145).